The chain runs to 199 residues: Potassium-transporting ATPase KdpC subunit (199 aa).

The chain crosses the membrane as a helical span at residues 7 to 27 (PALVMTAALCLITGIIYPGLI).

The protein belongs to the KdpC family. The system is composed of three essential subunits: KdpA, KdpB and KdpC.

The protein localises to the cell inner membrane. In terms of biological role, part of the high-affinity ATP-driven potassium transport (or Kdp) system, which catalyzes the hydrolysis of ATP coupled with the electrogenic transport of potassium into the cytoplasm. This subunit acts as a catalytic chaperone that increases the ATP-binding affinity of the ATP-hydrolyzing subunit KdpB by the formation of a transient KdpB/KdpC/ATP ternary complex. This Gemmatimonas aurantiaca (strain DSM 14586 / JCM 11422 / NBRC 100505 / T-27) protein is Potassium-transporting ATPase KdpC subunit.